Reading from the N-terminus, the 307-residue chain is MDINLDALVEANRRYTKEGHVATYIPALAKVNPDQLGVCIYDLKENKEFSAGEYDVRFAIESISKVPTLILAILDNGIEKVFSEVGTEPSGFAFNSIMNMQINHKNKPSNPFINAGAIKVVSLLKGKNDEERFKRILDFYRKIMNDDEITLDTEIYLSERETGDINRSLAYYMKGNGIMEGDVTDILDSYFKQCSVLVTAKDLARLGAVLANEGVMPWNGERLFSVETATVVKSLMTTYGLYDESGAFSVHIGLPSKSGVGGGILSSVPNKCGIGLFSPALDVSGNSVASMKLLKEIADKLKLDIFR.

The substrate site is built by serine 62, asparagine 114, glutamate 159, asparagine 166, tyrosine 190, tyrosine 242, and valine 260.

It belongs to the glutaminase family. Homotetramer.

The enzyme catalyses L-glutamine + H2O = L-glutamate + NH4(+). The protein is Glutaminase 1 of Clostridium perfringens (strain 13 / Type A).